The primary structure comprises 839 residues: Transient receptor potential cation channel subfamily V member 1 (839 aa).

The disordered stretch occupies residues 1-60; it reads MEKWASLDSDESEPPAQENSCPDPPDRDPNSKPPPAKPHIFATRSRTRLFGKGDSEEASP. Over 1–433 the chain is Cytoplasmic; the sequence is MEKWASLDSD…QDKWDRFVKR (433 aa). The stretch at 111–139 is one ANK 1 repeat; the sequence is RLYDRRSIFDAVAQSNCQELESLLSFLQK. An ATP-binding site is contributed by Arg-116. Ser-117 is subject to Phosphoserine; by PKA and PKD. Thr-145 bears the Phosphothreonine; by PKA; in vitro mark. One copy of the ANK 2 repeat lies at 154–186; it reads TGKTCLLKAMLNLHNGQNDTIALLLDIARKTDS. ATP is bound by residues Lys-156, Lys-161, Asn-165, 200–203, and 211–212; these read YKGQ and ER. ANK repeat units lie at residues 204 to 229, 250 to 277, 286 to 322, and 336 to 359; these read TALH…ADVQ, ELPL…QPAD, NTVL…KLHP, and TPLA…REIH. Thr-371 carries the phosphothreonine; by PKA; in vitro modification. One copy of the ANK 7 repeat lies at 394-416; it reads NSVLEVIAYSSSETPNRHDMLLV. The helical transmembrane segment at 434-455 threads the bilayer; it reads IFYFNFFVYCLYMIIFTTAAYY. Residues 456 to 472 are Extracellular-facing; the sequence is RPVEGLPPYKLNNTVGD. Residues 473–497 form a helical membrane-spanning segment; it reads YFRVTGEILSVSGGVYFFFRGIQYF. Residues 498-510 are Cytoplasmic-facing; it reads LQRRPSLKSLFVD. Ser-503 is subject to Phosphoserine; by PKC/PRKCE. Residues 511-532 form a helical membrane-spanning segment; it reads SYSEILFFVQSLFMLVSVVLYF. Position 512 to 513 (512 to 513) interacts with resiniferatoxin; it reads YS. Topologically, residues 533–535 are extracellular; sequence SHR. The chain crosses the membrane as a helical span at residues 536 to 556; sequence KEYVASMVFSLAMGWTNMLYY. Residues Thr-551 and Arg-558 each coordinate resiniferatoxin. Topologically, residues 557-559 are cytoplasmic; that stretch reads TRG. Residues 560-598 form a helical membrane-spanning segment; the sequence is FQQMGIYAVMIEKMILRDLCRFMFVYLVFLFGFSTAVVT. At 599–630 the chain is on the extracellular side; sequence LIEDGKNNSLPVESPPHKCRGSACRPGNSYNS. A glycan (N-linked (GlcNAc...) asparagine) is linked at Asn-605. The pore-forming intramembrane region spans 631 to 652; sequence LYSTCLELFKFTIGMGDLEFTE. Gly-644 is a Na(+) binding site. The Selectivity filter motif lies at 644 to 647; it reads GMGD. A Ca(2+)-binding site is contributed by Asp-647. Topologically, residues 653–656 are extracellular; that stretch reads NYDF. Residues 657 to 683 traverse the membrane as a helical segment; sequence KAVFIILLLAYVILTYILLLNMLIALM. Over 684 to 839 the chain is Cytoplasmic; that stretch reads GETVNKIAQE…FKDSMAPGEK (156 aa). Positions 685–713 are AD; that stretch reads ETVNKIAQESKNIWKLQRAITILDTEKSF. Thr-705 is subject to Phosphothreonine. Positions 768 to 802 are interaction with calmodulin; it reads EGVKRTLSFSLRSGRVSGRNWKNFALVPLLRDAST. The residue at position 775 (Ser-775) is a Phosphoserine. Positions 778 to 793 are required for PIP2-mediated channel inhibition; the sequence is LRSGRVSGRNWKNFAL. Position 801 is a phosphoserine; by PKC/PRKCE and PKC/PRKCZ (Ser-801). Residues 802–815 show a composition bias toward basic and acidic residues; sequence TRDRHSTQPEEVQL. A disordered region spans residues 802 to 839; it reads TRDRHSTQPEEVQLKHYTGSLKPEDAEVFKDSMAPGEK. Ser-821 carries the phosphoserine modification. The span at 823–839 shows a compositional bias: basic and acidic residues; it reads KPEDAEVFKDSMAPGEK.

This sequence belongs to the transient receptor (TC 1.A.4) family. TrpV subfamily. TRPV1 sub-subfamily. Homotetramer. May also form a heteromeric channel with TRPV3. Interacts with CALM, PRKCM and CSK. Interacts with PRKCG and NTRK1, probably by forming a trimeric complex. Interacts with PIRT. Interacts with the Scolopendra mutilans RhTx toxin. Interacts with TMEM100. Interacts with PACS2. In terms of processing, phosphorylation by PKA reverses capsaicin-induced dephosphorylation at multiple sites probably including Ser-117 as a major phosphorylation site. Phosphorylation by CAMKII seems to regulate binding to vanilloids. Phosphorylated and modulated by PRKCE, PRKCM and probably PRKCZ. Dephosphorylation by calcineurin seems to lead to receptor desensitization and phosphorylation by CAMKII recovers activity. In terms of tissue distribution, detected in neurons in the root ganglia (at protein level). Detected in dorsal root ganglia.

Its subcellular location is the postsynaptic cell membrane. The protein localises to the cell projection. The protein resides in the dendritic spine membrane. It localises to the cell membrane. The enzyme catalyses Ca(2+)(in) = Ca(2+)(out). The catalysed reaction is Mg(2+)(in) = Mg(2+)(out). It catalyses the reaction Na(+)(in) = Na(+)(out). It carries out the reaction K(+)(in) = K(+)(out). The channel is sensitized by ATP binding. Repeated stimulation with capsaicin gives rise to progressively smaller responses, due to desensitization. This desensitization is triggered by the influx of calcium ions and is inhibited by elevated ATP levels. Ca(2+) and CALM displace ATP from its binding site and trigger a conformation change that leads to a closed, desensitized channel. The double-knot toxin (DkTx) from the Chinese earth tiger tarantula activates the channel and traps it in an open conformation. The Scolopendra mutilans RhTx toxin potentiates the heat activation pathway mediated by this channel by binding to the charge-rich outer pore region (in an activated state). Channel activity is activated via the interaction with PIRT and phosphatidylinositol 4,5-bisphosphate (PIP2). Both PIRT and PIP2 are required to activate channel activity. Intracellular PIP2 inhibits desensitization. Its function is as follows. Non-selective calcium permeant cation channel involved in detection of noxious chemical and thermal stimuli. Seems to mediate proton influx and may be involved in intracellular acidosis in nociceptive neurons. Involved in mediation of inflammatory pain and hyperalgesia. Sensitized by a phosphatidylinositol second messenger system activated by receptor tyrosine kinases, which involves PKC isozymes and PCL. Activation by vanilloids, like capsaicin, and temperatures higher than 42 degrees Celsius. Upon activation, exhibits a time- and Ca(2+)-dependent outward rectification, followed by a long-lasting refractory state. Mild extracellular acidic pH (6.5) potentiates channel activation by noxious heat and vanilloids, whereas acidic conditions (pH &lt;6) directly activate the channel. Can be activated by endogenous compounds, including 12-hydroperoxytetraenoic acid and bradykinin. Acts as ionotropic endocannabinoid receptor with central neuromodulatory effects. Triggers a form of long-term depression (TRPV1-LTD) mediated by the endocannabinoid anandamine in the hippocampus and nucleus accumbens by affecting AMPA receptors endocytosis. In Mus musculus (Mouse), this protein is Transient receptor potential cation channel subfamily V member 1 (Trpv1).